The following is a 67-amino-acid chain: Large ribosomal subunit protein bL35 (67 aa).

Basic residues predominate over residues 1 to 16 (MPKMKTKSSAKKRFRV). Positions 1-23 (MPKMKTKSSAKKRFRVRPGGTVK) are disordered.

This sequence belongs to the bacterial ribosomal protein bL35 family.

This is Large ribosomal subunit protein bL35 from Variovorax paradoxus (strain S110).